A 464-amino-acid chain; its full sequence is MGSPGLRPELLLPQVLPLLLALLHVLPSQGFPGSGDSPLEDDGVWYSHSLYKDTPWCSPIKVKYGDVYCRAPPGGYYKTALGTRCDIRCRKGYELHGSSQLICQSNKRWSDKVICKQKRCPTLTMPANGGFKCVDGAYFNSRCEYYCSPGYTLKGERTVTCMDNKAWSGRPASCVDLEPPRIKCPSVKERIAEPNKLTVRVSWESPEGRDTADGILTDVILKGLPPGSNFPEGDHKIEYTVYDRAENKGTCKFRVKVRVRRCGKLNAPENGYMKCSSDGDNYGATCEFSCIGGYELQGSPARVCQSNLAWSGTEPSCAAMNVNVGVRTAAALLDQFYEKRRLLIVSTPTARNLLYRLQLGMLQQAQCGLDLRHVTVVELVGVFPTLIGRIRAKIMPPALALQLRLLLRIPLYSFSMVVVDKHGMDKERYVSLVTPMALFNLIDTFPLRKEEMILQAEMGQTCNV.

The first 30 residues, 1–30 (MGSPGLRPELLLPQVLPLLLALLHVLPSQG), serve as a signal peptide directing secretion. Residue S34 is glycosylated (O-linked (Xyl...) (chondroitin sulfate) serine). 5 cysteine pairs are disulfide-bonded: C57–C85, C69–C103, C89–C115, C120–C161, and C147–C174. Sushi domains follow at residues 57-117 (CSPI…ICKQ) and 118-176 (KRCP…SCVD). One can recognise an HYR domain in the interval 177-259 (LEPPRIKCPS…TCKFRVKVRV (83 aa)). The Sushi 3 domain occupies 260 to 319 (RRCGKLNAPENGYMKCSSDGDNYGATCEFSCIGGYELQGSPARVCQSNLAWSGTEPSCAA). Disulfide bonds link C262-C304 and C290-C317.

The sequence is that of Sushi-repeat-containing protein SRPX (Srpx) from Mus musculus (Mouse).